The chain runs to 211 residues: Uridine kinase (211 aa).

12 to 19 (GGSGSGKT) serves as a coordination point for ATP.

This sequence belongs to the uridine kinase family.

It localises to the cytoplasm. It carries out the reaction uridine + ATP = UMP + ADP + H(+). The catalysed reaction is cytidine + ATP = CMP + ADP + H(+). Its pathway is pyrimidine metabolism; CTP biosynthesis via salvage pathway; CTP from cytidine: step 1/3. It participates in pyrimidine metabolism; UMP biosynthesis via salvage pathway; UMP from uridine: step 1/1. The sequence is that of Uridine kinase (udk) from Bacillus subtilis (strain 168).